We begin with the raw amino-acid sequence, 391 residues long: DNA/RNA-binding protein KIN17 (391 aa).

The C2H2-type zinc finger occupies 28–50; the sequence is CQMCQKQCRDENGFKCHCMSESH. The tract at residues 51 to 160 is winged helix-turn-helix (wHTH); it reads QRQLLLASEN…RQLELEKKKK (110 aa). The residue at position 135 (K135) is an N6,N6,N6-trimethyllysine; by METTL22; alternate. At K135 the chain carries N6-methyllysine; alternate. Coiled coils occupy residues 147-180 and 252-275; these read ETIR…VRRG and AKKK…TART. A disordered region spans residues 206-258; sequence NLNKGAGGSAGATTSKSSSLGPSALKLLGSAASGKRKESSQSSAQPAKKKKSA. Residues 282–332 form a C-terminal subdomain A region; sequence GIVVKIITKKLGEKYHKKKGVVKEVIDRYTAVVKMTDSGDRLKLDQTHLET. Residues 338–389 are C-terminal subdomain B; sequence GKRVLVLNGGYRGNEGTLESINEKAFSATIVIETGPLKGRRVEGIQYEDISK.

This sequence belongs to the KIN17 family. In terms of assembly, associated with DNA polymerase alpha, RFC1 and cyclin A, in multiprotein DNA replication complexes. Also associates with replication origins at the G1/S phase boundary and throughout the S phase in vivo. Highly expressed in transformed mouse AtT20 neuroendocrine cells. Expressed at a lower level in testis, kidney, skeletal muscle, liver, lung, spleen, brain and heart and kidney. In testis, expressed at much higher levels in proliferating cells than in differentiating cells. Not detected in embryo.

The protein resides in the nucleus. It is found in the cytoplasm. Involved in DNA replication and the cellular response to DNA damage. May participate in DNA replication factories and create a bridge between DNA replication and repair mediated by high molecular weight complexes. May play a role in illegitimate recombination and regulation of gene expression. May participate in mRNA processing. Binds, in vitro, to double-stranded DNA. Also shown to bind preferentially to curved DNA in vitro and in vivo. Binds via its C-terminal domain to RNA in vitro. The chain is DNA/RNA-binding protein KIN17 from Mus musculus (Mouse).